Reading from the N-terminus, the 147-residue chain is NAD(P)H-quinone oxidoreductase subunit N (147 aa).

Belongs to the complex I NdhN subunit family. As to quaternary structure, NDH-1 can be composed of about 15 different subunits; different subcomplexes with different compositions have been identified which probably have different functions.

Its subcellular location is the cellular thylakoid membrane. The catalysed reaction is a plastoquinone + NADH + (n+1) H(+)(in) = a plastoquinol + NAD(+) + n H(+)(out). It carries out the reaction a plastoquinone + NADPH + (n+1) H(+)(in) = a plastoquinol + NADP(+) + n H(+)(out). NDH-1 shuttles electrons from an unknown electron donor, via FMN and iron-sulfur (Fe-S) centers, to quinones in the respiratory and/or the photosynthetic chain. The immediate electron acceptor for the enzyme in this species is believed to be plastoquinone. Couples the redox reaction to proton translocation, and thus conserves the redox energy in a proton gradient. Cyanobacterial NDH-1 also plays a role in inorganic carbon-concentration. The protein is NAD(P)H-quinone oxidoreductase subunit N of Synechococcus sp. (strain JA-3-3Ab) (Cyanobacteria bacterium Yellowstone A-Prime).